Reading from the N-terminus, the 556-residue chain is Formate--tetrahydrofolate ligase (556 aa).

Thr65–Ser72 is an ATP binding site.

This sequence belongs to the formate--tetrahydrofolate ligase family.

It carries out the reaction (6S)-5,6,7,8-tetrahydrofolate + formate + ATP = (6R)-10-formyltetrahydrofolate + ADP + phosphate. It participates in one-carbon metabolism; tetrahydrofolate interconversion. The chain is Formate--tetrahydrofolate ligase from Streptococcus equi subsp. equi (strain 4047).